The primary structure comprises 250 residues: Deoxynucleoside kinase (250 aa).

27–35 (GNIGSGKTT) lines the ATP pocket. Residues E52, Y70, and Q81 each coordinate substrate. Catalysis depends on E104, which acts as the Proton acceptor. The substrate site is built by R105 and E172. Residues S236, S241, and S243 each carry the phosphoserine modification.

The protein belongs to the DCK/DGK family. As to quaternary structure, monomer.

The enzyme catalyses a 2'-deoxyribonucleoside + ATP = a 2'-deoxyribonucleoside 5'-phosphate + ADP + H(+). Subject to feedback inhibition by dTTP. In terms of biological role, deoxyribonucleoside kinase that has a broad specificity phosphorylating thymidine, 2'-deoxyriboadenosine, 2'-deoxyribocytidine and 2'-deoxyriboguanosine. Specificity is higher for pyrimidine nucleosides. Several anti-viral and anti-cancer nucleoside analogs are also efficiently phosphorylated. The chain is Deoxynucleoside kinase (dnk) from Drosophila melanogaster (Fruit fly).